Reading from the N-terminus, the 431-residue chain is Putative F-box/FBD/LRR-repeat protein At4g26350 (431 aa).

An F-box domain is found at M1–D47. 5 LRR repeats span residues N52–N78, C85–I109, I132–C159, I160–R185, and C309–N334. The FBD domain occupies C348–S398.

The polypeptide is Putative F-box/FBD/LRR-repeat protein At4g26350 (Arabidopsis thaliana (Mouse-ear cress)).